We begin with the raw amino-acid sequence, 410 residues long: Cysteine desulfurase IscS (410 aa).

Pyridoxal 5'-phosphate contacts are provided by residues 80-81 (AT), N160, Q188, and 208-210 (SGH). N6-(pyridoxal phosphate)lysine is present on K211. Residue T248 participates in pyridoxal 5'-phosphate binding. C334 acts as the Cysteine persulfide intermediate in catalysis. C334 contributes to the [2Fe-2S] cluster binding site.

The protein belongs to the class-V pyridoxal-phosphate-dependent aminotransferase family. NifS/IscS subfamily. In terms of assembly, homodimer. Forms a heterotetramer with IscU, interacts with other sulfur acceptors. Pyridoxal 5'-phosphate is required as a cofactor.

Its subcellular location is the cytoplasm. The catalysed reaction is (sulfur carrier)-H + L-cysteine = (sulfur carrier)-SH + L-alanine. Its pathway is cofactor biosynthesis; iron-sulfur cluster biosynthesis. In terms of biological role, master enzyme that delivers sulfur to a number of partners involved in Fe-S cluster assembly, tRNA modification or cofactor biosynthesis. Catalyzes the removal of elemental sulfur atoms from cysteine to produce alanine. Functions as a sulfur delivery protein for Fe-S cluster synthesis onto IscU, an Fe-S scaffold assembly protein, as well as other S acceptor proteins. The protein is Cysteine desulfurase IscS of Rickettsia akari (strain Hartford).